We begin with the raw amino-acid sequence, 126 residues long: Thioredoxin H-type 1 (126 aa).

The region spanning 2 to 120 is the Thioredoxin domain; the sequence is AANDATSSEE…LQQTIVKHAA (119 aa). Catalysis depends on nucleophile residues Cys46 and Cys49. Cys46 and Cys49 are disulfide-bonded.

This sequence belongs to the thioredoxin family. Plant H-type subfamily.

The protein localises to the cytoplasm. In terms of biological role, participates in various redox reactions through the reversible oxidation of the active center dithiol to a disulfide. The H form is known to activate a number of cytosolic enzymes. The chain is Thioredoxin H-type 1 from Nicotiana tabacum (Common tobacco).